A 286-amino-acid chain; its full sequence is Shikimate dehydrogenase (NADP(+)) (286 aa).

Shikimate is bound by residues 19–21 (SLS) and Thr66. The active-site Proton acceptor is Lys70. Residues Asn91 and Asp107 each coordinate shikimate. Residues 129 to 133 (GSGGA) and Leu229 each bind NADP(+). Tyr231 serves as a coordination point for shikimate. Gly252 serves as a coordination point for NADP(+).

This sequence belongs to the shikimate dehydrogenase family. As to quaternary structure, homodimer.

It carries out the reaction shikimate + NADP(+) = 3-dehydroshikimate + NADPH + H(+). Its pathway is metabolic intermediate biosynthesis; chorismate biosynthesis; chorismate from D-erythrose 4-phosphate and phosphoenolpyruvate: step 4/7. Functionally, involved in the biosynthesis of the chorismate, which leads to the biosynthesis of aromatic amino acids. Catalyzes the reversible NADPH linked reduction of 3-dehydroshikimate (DHSA) to yield shikimate (SA). The chain is Shikimate dehydrogenase (NADP(+)) from Prochlorococcus marinus (strain MIT 9312).